A 523-amino-acid polypeptide reads, in one-letter code: Glutamate--cysteine ligase (523 aa).

Belongs to the glutamate--cysteine ligase type 1 family. Type 1 subfamily.

The enzyme catalyses L-cysteine + L-glutamate + ATP = gamma-L-glutamyl-L-cysteine + ADP + phosphate + H(+). Its pathway is sulfur metabolism; glutathione biosynthesis; glutathione from L-cysteine and L-glutamate: step 1/2. In Shewanella oneidensis (strain ATCC 700550 / JCM 31522 / CIP 106686 / LMG 19005 / NCIMB 14063 / MR-1), this protein is Glutamate--cysteine ligase.